A 288-amino-acid polypeptide reads, in one-letter code: UTP--glucose-1-phosphate uridylyltransferase (288 aa).

Belongs to the UDPGP type 2 family.

It carries out the reaction alpha-D-glucose 1-phosphate + UTP + H(+) = UDP-alpha-D-glucose + diphosphate. Its pathway is glycolipid metabolism; diglucosyl-diacylglycerol biosynthesis. In terms of biological role, catalyzes the formation of UDP-glucose from glucose-1-phosphate and UTP. This is an intermediate step in the biosynthesis of diglucosyl-diacylglycerol (Glc2-DAG), i.e. the predominant glycolipid found in the S.aureus membrane, which is also used as a membrane anchor for lipoteichoic acid (LTA). This chain is UTP--glucose-1-phosphate uridylyltransferase (gtaB), found in Staphylococcus aureus (strain MSSA476).